Consider the following 232-residue polypeptide: Uracil-DNA glycosylase (232 aa).

The active-site Proton acceptor is D64.

The protein belongs to the uracil-DNA glycosylase (UDG) superfamily. UNG family.

It is found in the cytoplasm. It carries out the reaction Hydrolyzes single-stranded DNA or mismatched double-stranded DNA and polynucleotides, releasing free uracil.. In terms of biological role, excises uracil residues from the DNA which can arise as a result of misincorporation of dUMP residues by DNA polymerase or due to deamination of cytosine. This Shouchella clausii (strain KSM-K16) (Alkalihalobacillus clausii) protein is Uracil-DNA glycosylase.